Consider the following 266-residue polypeptide: Putative [LysW]-aminoadipate/[LysW]-glutamate kinase (266 aa).

Substrate is bound by residues 36-37 (GG), Arg-63, and Asn-168.

The protein belongs to the acetylglutamate kinase family. LysZ subfamily.

The protein localises to the cytoplasm. It carries out the reaction [amino-group carrier protein]-C-terminal-N-(1,4-dicarboxybutan-1-yl)-L-glutamine + ATP = [amino-group carrier protein]-C-terminal-N-(1-carboxy-5-phosphooxy-5-oxopentan-1-yl)-L-glutamine + ADP. The catalysed reaction is [amino-group carrier protein]-C-terminal-gamma-(L-glutamyl)-L-glutamate + ATP = [amino-group carrier protein]-C-terminal-gamma-(5-phospho-L-glutamyl)-L-glutamate + ADP. Its pathway is amino-acid biosynthesis; L-lysine biosynthesis via AAA pathway; L-lysine from L-alpha-aminoadipate (Thermus route): step 2/5. It functions in the pathway amino-acid biosynthesis; L-arginine biosynthesis. Its function is as follows. Involved in both the arginine and lysine biosynthetic pathways. Phosphorylates the LysW-bound precursors glutamate (for arginine biosynthesis), respectively alpha-aminoadipate (for lysine biosynthesis). This is Putative [LysW]-aminoadipate/[LysW]-glutamate kinase from Cenarchaeum symbiosum (strain A).